An 81-amino-acid polypeptide reads, in one-letter code: Cytochrome b559 subunit alpha (81 aa).

The helical transmembrane segment at 21-35 (VIHSITIPSLFVSGW) threads the bilayer. Heme is bound at residue His-23.

It belongs to the PsbE/PsbF family. As to quaternary structure, heterodimer of an alpha subunit and a beta subunit. PSII is composed of 1 copy each of membrane proteins PsbA, PsbB, PsbC, PsbD, PsbE, PsbF, PsbH, PsbI, PsbJ, PsbK, PsbL, PsbM, PsbT, PsbX, PsbY, PsbZ, Psb30/Ycf12, at least 3 peripheral proteins of the oxygen-evolving complex and a large number of cofactors. It forms dimeric complexes. Heme b is required as a cofactor.

Its subcellular location is the plastid. The protein localises to the chloroplast thylakoid membrane. In terms of biological role, this b-type cytochrome is tightly associated with the reaction center of photosystem II (PSII). PSII is a light-driven water:plastoquinone oxidoreductase that uses light energy to abstract electrons from H(2)O, generating O(2) and a proton gradient subsequently used for ATP formation. It consists of a core antenna complex that captures photons, and an electron transfer chain that converts photonic excitation into a charge separation. This is Cytochrome b559 subunit alpha from Mesostigma viride (Green alga).